Consider the following 616-residue polypeptide: Coagulation factor XII (616 aa).

Residues 1–19 (MRALLLLGILLVSLESALL) form the signal peptide. The region spanning 42-90 (VTGEPCHFPFQYYRQLYYKCIQRGQRGPRPWCATTPNFEKDQRWAYCLE) is the Fibronectin type-II domain. Intrachain disulfides connect Cys-47-Cys-73, Cys-61-Cys-88, Cys-98-Cys-110, Cys-104-Cys-119, Cys-121-Cys-130, Cys-135-Cys-163, Cys-161-Cys-170, Cys-178-Cys-189, Cys-183-Cys-198, Cys-200-Cys-209, Cys-217-Cys-295, Cys-238-Cys-277, and Cys-266-Cys-290. The 38-residue stretch at 94 to 131 (VKDHCNKGNPCQKGGTCVNMPNGPHCICPDHFTGKHCQ) folds into the EGF-like 1 domain. Thr-109 is a glycosylation site (O-linked (Fuc) threonine). Positions 133–173 (EKCFEPQFLQFFQENEIWHRFEPAGVSKCQCKGPKAQCKPV) constitute a Fibronectin type-I domain. Residues 174 to 210 (ASQVCSTNPCLNGGSCLQTEGHRLCRCPTGYAGRLCD) enclose the EGF-like 2 domain. Residues 216-295 (RCYSDRGLSY…SWQYCRLARC (80 aa)) enclose the Kringle domain. Residues Asn-249, Asn-271, and Asn-335 are each glycosylated (N-linked (GlcNAc...) asparagine). The interval 303–342 (PPILTPTQSPSEHQDSPLLSREPQPTTQTPSQNLTSAWCA) is disordered. Positions 325 to 338 (PQPTTQTPSQNLTS) are enriched in polar residues. Cystine bridges form between Cys-358-Cys-485, Cys-396-Cys-412, Cys-404-Cys-474, Cys-435-Cys-438, Cys-501-Cys-570, Cys-533-Cys-549, and Cys-560-Cys-591. Residues 372–615 (IVGGLVALPG…YLAWIQEHTT (244 aa)) enclose the Peptidase S1 domain. The Charge relay system role is filled by His-411. The N-linked (GlcNAc...) asparagine glycan is linked to Asn-432. Asp-460 acts as the Charge relay system in catalysis. The Charge relay system role is filled by Ser-564.

It belongs to the peptidase S1 family. As to quaternary structure, interacts with HRG; the interaction, which is enhanced in the presence of zinc ions and inhibited by heparin-binding, inhibits factor XII autoactivation and contact-initiated coagulation. Post-translationally, O- and N-glycosylated.

The protein resides in the secreted. The enzyme catalyses Selective cleavage of Arg-|-Ile bonds in factor VII to form factor VIIa and factor XI to form factor XIa.. Its activity is regulated as follows. Activity is promoted in the presence of negatively charged surfaces. Functionally, factor XII is a serum glycoprotein that participates in the initiation of blood coagulation, fibrinolysis, and the generation of bradykinin and angiotensin. Prekallikrein is cleaved by factor XII to form kallikrein, which then cleaves factor XII first to alpha-factor XIIa and then trypsin cleaves it to beta-factor XIIa. Alpha-factor XIIa activates factor XI to factor XIa. The chain is Coagulation factor XII (F12) from Sus scrofa (Pig).